The following is a 329-amino-acid chain: DNA repair and recombination protein RadA (329 aa).

107–114 provides a ligand contact to ATP; that stretch reads GEFGSGKS.

It belongs to the eukaryotic RecA-like protein family.

Its function is as follows. Involved in DNA repair and in homologous recombination. Binds and assemble on single-stranded DNA to form a nucleoprotein filament. Hydrolyzes ATP in a ssDNA-dependent manner and promotes DNA strand exchange between homologous DNA molecules. In Methanocorpusculum labreanum (strain ATCC 43576 / DSM 4855 / Z), this protein is DNA repair and recombination protein RadA.